Reading from the N-terminus, the 208-residue chain is Small ribosomal subunit protein uS4 (208 aa).

Residues 98–166 (SRLDNVVYRM…VKEAIEASRN (69 aa)) enclose the S4 RNA-binding domain.

It belongs to the universal ribosomal protein uS4 family. Part of the 30S ribosomal subunit. Contacts protein S5. The interaction surface between S4 and S5 is involved in control of translational fidelity.

Its function is as follows. One of the primary rRNA binding proteins, it binds directly to 16S rRNA where it nucleates assembly of the body of the 30S subunit. Functionally, with S5 and S12 plays an important role in translational accuracy. The chain is Small ribosomal subunit protein uS4 from Kosmotoga olearia (strain ATCC BAA-1733 / DSM 21960 / TBF 19.5.1).